Consider the following 469-residue polypeptide: Glutamate--tRNA ligase (469 aa).

The short motif at 9-19 (PSPTGFLHVGG) is the 'HIGH' region element. 4 residues coordinate Zn(2+): Cys98, Cys100, Cys125, and Asp127. The 'KMSKS' region signature appears at 236-240 (KLSKR). Residue Lys239 participates in ATP binding.

Belongs to the class-I aminoacyl-tRNA synthetase family. Glutamate--tRNA ligase type 1 subfamily. As to quaternary structure, monomer. Requires Zn(2+) as cofactor.

The protein localises to the cytoplasm. The catalysed reaction is tRNA(Glu) + L-glutamate + ATP = L-glutamyl-tRNA(Glu) + AMP + diphosphate. Its function is as follows. Catalyzes the attachment of glutamate to tRNA(Glu) in a two-step reaction: glutamate is first activated by ATP to form Glu-AMP and then transferred to the acceptor end of tRNA(Glu). The chain is Glutamate--tRNA ligase from Shewanella baltica (strain OS185).